Reading from the N-terminus, the 585-residue chain is Zinc finger protein 614 (585 aa).

Positions 8 to 79 (LTLEDVAVEF…DAKIQNKNCP (72 aa)) constitute a KRAB domain. The C2H2-type 1; atypical zinc finger occupies 205-227 (HACIECEQTFLRKSQLIYHENIC). The segment at 257-281 (KICIPNEYRKGSTVKSSLITHQQTH) adopts a C2H2-type 2; degenerate zinc-finger fold. C2H2-type zinc fingers lie at residues 287–309 (YMCS…QRTH), 315–337 (YVCK…QRTH), 343–365 (YICS…QRTH), 371–393 (YMCS…QRSH), 399–421 (YICS…QRTH), 427–449 (YICN…QRTH), 455–477 (YECN…ERCH), 483–505 (FVCT…QRIH), 511–533 (YECN…QRTH), and 539–561 (YGCS…KKMH).

The protein belongs to the krueppel C2H2-type zinc-finger protein family.

It is found in the nucleus. Functionally, may be involved in transcriptional regulation. In Homo sapiens (Human), this protein is Zinc finger protein 614 (ZNF614).